The chain runs to 166 residues: Regulatory protein RecX (166 aa).

The protein belongs to the RecX family.

The protein resides in the cytoplasm. Functionally, modulates RecA activity. The protein is Regulatory protein RecX of Escherichia fergusonii (strain ATCC 35469 / DSM 13698 / CCUG 18766 / IAM 14443 / JCM 21226 / LMG 7866 / NBRC 102419 / NCTC 12128 / CDC 0568-73).